The sequence spans 159 residues: Ribosome-binding factor A (159 aa).

The disordered stretch occupies residues 127–159; the sequence is TYAGEADPYRRPAVDDAGDSADDADPAEDERPS. Residues 142–159 show a composition bias toward acidic residues; it reads DAGDSADDADPAEDERPS.

Belongs to the RbfA family. Monomer. Binds 30S ribosomal subunits, but not 50S ribosomal subunits or 70S ribosomes.

It localises to the cytoplasm. One of several proteins that assist in the late maturation steps of the functional core of the 30S ribosomal subunit. Associates with free 30S ribosomal subunits (but not with 30S subunits that are part of 70S ribosomes or polysomes). Required for efficient processing of 16S rRNA. May interact with the 5'-terminal helix region of 16S rRNA. In Beutenbergia cavernae (strain ATCC BAA-8 / DSM 12333 / CCUG 43141 / JCM 11478 / NBRC 16432 / NCIMB 13614 / HKI 0122), this protein is Ribosome-binding factor A.